Consider the following 142-residue polypeptide: Small ribosomal subunit protein eS6 (142 aa).

The segment at 117–142 is disordered; the sequence is EKPLDELAPKKEKKEGAAGGRAPAKK. The span at 118-132 shows a compositional bias: basic and acidic residues; sequence KPLDELAPKKEKKEG.

The protein belongs to the eukaryotic ribosomal protein eS6 family.

This chain is Small ribosomal subunit protein eS6, found in Methanocella arvoryzae (strain DSM 22066 / NBRC 105507 / MRE50).